The sequence spans 161 residues: Nucleotide-binding protein Bcep1808_2648 (161 aa).

This sequence belongs to the YajQ family.

Its function is as follows. Nucleotide-binding protein. The sequence is that of Nucleotide-binding protein Bcep1808_2648 from Burkholderia vietnamiensis (strain G4 / LMG 22486) (Burkholderia cepacia (strain R1808)).